The primary structure comprises 372 residues: 2,7-anhydro-N-acetylneuraminate hydratase (372 aa).

Positions 11, 12, 33, 36, 68, 70, 73, 90, 91, and 160 each coordinate NAD(+).

It belongs to the Gfo/Idh/MocA family. As to quaternary structure, homodimer. The cofactor is NAD(+).

The catalysed reaction is N-acetyl-2,7-anhydro-alpha-neuraminate + H2O = N-acetyl-alpha-neuraminate. It catalyses the reaction 2-deoxy-2,3-dehydro-N-acetylneuraminate + H2O = N-acetyl-alpha-neuraminate. All conversions require NAD(+) as a cofactor, which is regenerated in the reaction. The presence of EGTA and several divalent cations does not affect the activity. Hydratase involved in the degradation of sialic acids. Catalyzes the reversible conversion of the dehydrated form of N-acetylneuraminate (Neu5Ac), 2,7-anhydro-N-acetylneuraminate (2,7-AN), to Neu5Ac. Also catalyzes the irreversible conversion of 2-deoxy-2,3-didehydro-N-acetylneuraminate (2,3-EN) to Neu5Ac. The reaction mechanism involves keto intermediates and the transient formation of NADH. This is 2,7-anhydro-N-acetylneuraminate hydratase from Escherichia coli (strain K12).